The sequence spans 190 residues: Transcription antitermination protein NusB (190 aa).

Residues 158–190 are disordered; it reads AGTSEDHVPQREPAAGQLGQDDSNGGQVAAVCR.

This sequence belongs to the NusB family.

In terms of biological role, involved in transcription antitermination. Required for transcription of ribosomal RNA (rRNA) genes. Binds specifically to the boxA antiterminator sequence of the ribosomal RNA (rrn) operons. This is Transcription antitermination protein NusB from Mycobacterium leprae (strain TN).